We begin with the raw amino-acid sequence, 290 residues long: ATP synthase gamma chain (290 aa).

This sequence belongs to the ATPase gamma chain family. F-type ATPases have 2 components, CF(1) - the catalytic core - and CF(0) - the membrane proton channel. CF(1) has five subunits: alpha(3), beta(3), gamma(1), delta(1), epsilon(1). CF(0) has three main subunits: a, b and c.

Its subcellular location is the cell inner membrane. Its function is as follows. Produces ATP from ADP in the presence of a proton gradient across the membrane. The gamma chain is believed to be important in regulating ATPase activity and the flow of protons through the CF(0) complex. The protein is ATP synthase gamma chain of Delftia acidovorans (strain DSM 14801 / SPH-1).